A 182-amino-acid chain; its full sequence is UPF0397 protein VS_II0189 (182 aa).

Helical transmembrane passes span 8–28 (VVVI…MFGV), 41–61 (AVLA…VGFI), 72–92 (WGVW…IGLF), 110–130 (FALF…SSAF), and 146–166 (QLSI…FLIL).

The protein belongs to the UPF0397 family.

It is found in the cell membrane. This chain is UPF0397 protein VS_II0189, found in Vibrio atlanticus (strain LGP32) (Vibrio splendidus (strain Mel32)).